A 204-amino-acid polypeptide reads, in one-letter code: Peptide deformylase (204 aa).

Fe cation-binding residues include cysteine 131 and histidine 174. Glutamate 175 is a catalytic residue. A Fe cation-binding site is contributed by histidine 178.

It belongs to the polypeptide deformylase family. Fe(2+) is required as a cofactor.

The enzyme catalyses N-terminal N-formyl-L-methionyl-[peptide] + H2O = N-terminal L-methionyl-[peptide] + formate. Its function is as follows. Removes the formyl group from the N-terminal Met of newly synthesized proteins. Requires at least a dipeptide for an efficient rate of reaction. N-terminal L-methionine is a prerequisite for activity but the enzyme has broad specificity at other positions. The sequence is that of Peptide deformylase from Streptococcus thermophilus (strain CNRZ 1066).